The sequence spans 634 residues: Chaperone protein HtpG (634 aa).

The a; substrate-binding stretch occupies residues methionine 1–arginine 342. Residues glutamate 343 to glutamine 559 are b. Residues leucine 560 to alanine 634 form a c region.

The protein belongs to the heat shock protein 90 family. In terms of assembly, homodimer.

Its subcellular location is the cytoplasm. Molecular chaperone. Has ATPase activity. The chain is Chaperone protein HtpG from Xanthomonas campestris pv. campestris (strain ATCC 33913 / DSM 3586 / NCPPB 528 / LMG 568 / P 25).